An 84-amino-acid polypeptide reads, in one-letter code: Metallothionein-like protein 4A (84 aa).

Residues 1 to 26 (MADTGKGSSVAGCNDSCGCPSPCPGG) form a disordered region.

Belongs to the metallothionein superfamily. Type 15 family. As to expression, expressed specifically in seeds.

It is found in the cytoplasm. The protein localises to the nucleus. Its subcellular location is the cell membrane. Its function is as follows. Metallothioneins have a high content of cysteine residues that bind various heavy metals. Functions as a metal chelator of copper (Cu) and zinc (Zn). Plays a role in storing and distributing Zn ion in seed. In Arabidopsis thaliana (Mouse-ear cress), this protein is Metallothionein-like protein 4A (MT4A).